A 345-amino-acid chain; its full sequence is Selenide, water dikinase (345 aa).

Cys-16 is an active-site residue. Residues Lys-19 and Thr-45–Glu-47 each bind ATP. Asp-48 serves as a coordination point for Mg(2+). ATP contacts are provided by residues Asp-65, Asp-88, and Gly-136–Thr-138. Asp-88 serves as a coordination point for Mg(2+). A Mg(2+)-binding site is contributed by Asp-224.

It belongs to the selenophosphate synthase 1 family. Class I subfamily. Homodimer. Mg(2+) serves as cofactor.

It catalyses the reaction hydrogenselenide + ATP + H2O = selenophosphate + AMP + phosphate + 2 H(+). Functionally, synthesizes selenophosphate from selenide and ATP. The protein is Selenide, water dikinase of Aliarcobacter butzleri (strain RM4018) (Arcobacter butzleri).